Reading from the N-terminus, the 394-residue chain is LL-diaminopimelate aminotransferase (394 aa).

Tyr-14 and Gly-41 together coordinate substrate. Pyridoxal 5'-phosphate contacts are provided by residues Tyr-71, 104–105 (AK), Tyr-128, Asn-174, Tyr-205, and 233–235 (SFS). Residues Lys-105, Tyr-128, and Asn-174 each contribute to the substrate site. At Lys-236 the chain carries N6-(pyridoxal phosphate)lysine. Pyridoxal 5'-phosphate-binding residues include Arg-244 and Asn-275. Substrate-binding residues include Asn-275 and Arg-369.

Belongs to the class-I pyridoxal-phosphate-dependent aminotransferase family. LL-diaminopimelate aminotransferase subfamily. Homodimer. Requires pyridoxal 5'-phosphate as cofactor.

The catalysed reaction is (2S,6S)-2,6-diaminopimelate + 2-oxoglutarate = (S)-2,3,4,5-tetrahydrodipicolinate + L-glutamate + H2O + H(+). Its pathway is amino-acid biosynthesis; L-lysine biosynthesis via DAP pathway; LL-2,6-diaminopimelate from (S)-tetrahydrodipicolinate (aminotransferase route): step 1/1. Its function is as follows. Involved in the synthesis of meso-diaminopimelate (m-DAP or DL-DAP), required for both lysine and peptidoglycan biosynthesis. Catalyzes the direct conversion of tetrahydrodipicolinate to LL-diaminopimelate. Is also able to use meso-diaminopimelate, cystathionine, lysine or ornithine as substrates. The polypeptide is LL-diaminopimelate aminotransferase (Chlamydia trachomatis serovar D (strain ATCC VR-885 / DSM 19411 / UW-3/Cx)).